The following is a 74-amino-acid chain: Mu-Sparatoxin-Hp2 (74 aa).

Positions 1 to 20 (MKIIVLMMMLFAAFSAVVLA) are cleaved as a signal peptide. Positions 21-35 (DKSIEDAALDTVMDR) are excised as a propeptide. 3 disulfides stabilise this stretch: Cys42–Cys57, Cys49–Cys62, and Cys56–Cys66. The residue at position 73 (Leu73) is a Leucine amide.

In terms of tissue distribution, expressed by the venom gland.

It is found in the secreted. In terms of biological role, weakly nhibits voltage-gated sodium channels Nav1.7/SCN9A. High concentration of the toxin (3 uM) inhibits Nav1.7/SCN9A currents by 80%. The protein is Mu-Sparatoxin-Hp2 of Heteropoda pingtungensis (Pingtung huntsman spider).